The primary structure comprises 694 residues: Beta-galactosidase (694 aa).

The segment at 1–31 (MGKRFPSGWFSPRVHPPRRQRSPMTNQATPG) is disordered. Residues 22-31 (SPMTNQATPG) show a composition bias toward polar residues. Substrate contacts are provided by R144 and N182. E183 serves as the catalytic Proton donor. Residue E341 is the Nucleophile of the active site. Residues W349 and 389 to 392 (EKFH) contribute to the substrate site.

The protein belongs to the glycosyl hydrolase 42 family. As to quaternary structure, homotrimer.

The enzyme catalyses Hydrolysis of terminal non-reducing beta-D-galactose residues in beta-D-galactosides.. Strongly inhibited by glucose. No activity is lost during treatment with 100 mM EDTA after 2 hours. Activity not considerably affected by metal ions (5 mM), including Na(+), K(+), Mg(2+), Co(2+) and Ca(2+). Completely inhibited by Cu(2+) and Zn(2+) (5 mM) and is strongly inhibited by Mn(2+) (11%), Fe(2+) (25%) and Ni(2+) (38%) in comparison with the activity in the absence of cations (100%). Activity not affected by dithiothreitol, beta-mercaptoethanol and L-cysteine whereas reduced glutathione almost completely inactivates it. With ONPG as substrate, the addition of ethanol up to 20% still slightly stimulates activity. The activity increases up to 120% in the presence of 8% v/v ethanol at pH 5.5. Its function is as follows. Hydrolyzes p-nitrophenyl-beta-D-galactopyranoside (PNPG), o-nitrophenyl-beta-D-galactopyranoside (ONPG) and chromogen 5-bromo-4-chloro-3-indolyl-beta-D-galactopyranoside (X-gal), with highest activity against PNPG. Also acts on p-nitrophenyl-beta-D-glucopyranoside (PNPGlu) and o-nitrophenyl-beta-D-glucopyranoside (ONPGlu), but with significantly lower activity. This chain is Beta-galactosidase, found in Arthrobacter sp.